Reading from the N-terminus, the 165-residue chain is Nucleotide-binding protein LBF_1338 (165 aa).

Belongs to the YajQ family.

Nucleotide-binding protein. This Leptospira biflexa serovar Patoc (strain Patoc 1 / Ames) protein is Nucleotide-binding protein LBF_1338.